A 299-amino-acid chain; its full sequence is Glycerol-3-phosphate dehydrogenase [NAD(P)+] (299 aa).

NADPH is bound by residues Trp11, Arg30, His31, and Lys79. Residues Lys79, Gly107, and Ser109 each contribute to the sn-glycerol 3-phosphate site. Ala111 is an NADPH binding site. Positions 161, 214, 224, 225, and 226 each coordinate sn-glycerol 3-phosphate. Catalysis depends on Lys161, which acts as the Proton acceptor. NADPH is bound at residue Arg225. Residues Val249 and Glu251 each contribute to the NADPH site.

The protein belongs to the NAD-dependent glycerol-3-phosphate dehydrogenase family.

The protein resides in the cytoplasm. The enzyme catalyses sn-glycerol 3-phosphate + NAD(+) = dihydroxyacetone phosphate + NADH + H(+). It catalyses the reaction sn-glycerol 3-phosphate + NADP(+) = dihydroxyacetone phosphate + NADPH + H(+). It participates in membrane lipid metabolism; glycerophospholipid metabolism. Its function is as follows. Catalyzes the reduction of the glycolytic intermediate dihydroxyacetone phosphate (DHAP) to sn-glycerol 3-phosphate (G3P), the key precursor for phospholipid synthesis. The protein is Glycerol-3-phosphate dehydrogenase [NAD(P)+] of Nitratiruptor sp. (strain SB155-2).